Reading from the N-terminus, the 269-residue chain is Cytochrome c oxidase subunit 3 (269 aa).

A run of 7 helical transmembrane segments spans residues 24–44 (FYNS…MHGF), 46–66 (NMYI…TLWF), 90–110 (GVGL…WTFF), 132–152 (IDPF…GVTV), 167–187 (ALYG…FQGI), 207–227 (FSTG…SVGL), and 247–267 (ILYW…IYFW).

This sequence belongs to the cytochrome c oxidase subunit 3 family. Component of the cytochrome c oxidase (complex IV, CIV), a multisubunit enzyme composed of a catalytic core of 3 subunits and several supernumerary subunits. The complex exists as a monomer or a dimer and forms supercomplexes (SCs) in the inner mitochondrial membrane with ubiquinol-cytochrome c oxidoreductase (cytochrome b-c1 complex, complex III, CIII).

It is found in the mitochondrion inner membrane. It carries out the reaction 4 Fe(II)-[cytochrome c] + O2 + 8 H(+)(in) = 4 Fe(III)-[cytochrome c] + 2 H2O + 4 H(+)(out). Functionally, component of the cytochrome c oxidase, the last enzyme in the mitochondrial electron transport chain which drives oxidative phosphorylation. The respiratory chain contains 3 multisubunit complexes succinate dehydrogenase (complex II, CII), ubiquinol-cytochrome c oxidoreductase (cytochrome b-c1 complex, complex III, CIII) and cytochrome c oxidase (complex IV, CIV), that cooperate to transfer electrons derived from NADH and succinate to molecular oxygen, creating an electrochemical gradient over the inner membrane that drives transmembrane transport and the ATP synthase. Cytochrome c oxidase is the component of the respiratory chain that catalyzes the reduction of oxygen to water. Electrons originating from reduced cytochrome c in the intermembrane space (IMS) are transferred via the dinuclear copper A center (CU(A)) of subunit 2 and heme A of subunit 1 to the active site in subunit 1, a binuclear center (BNC) formed by heme A3 and copper B (CU(B)). The BNC reduces molecular oxygen to 2 water molecules using 4 electrons from cytochrome c in the IMS and 4 protons from the mitochondrial matrix. The sequence is that of Cytochrome c oxidase subunit 3 (COXIII) from Trichophyton rubrum (Athlete's foot fungus).